Reading from the N-terminus, the 702-residue chain is Polyribonucleotide nucleotidyltransferase (702 aa).

Positions 485 and 491 each coordinate Mg(2+). The KH domain occupies 552–611 (PRITTLKINPEKIRDVIGKGGATIRALTEETGTTIELEDDGTVKIASANGEATKEAIRRI). Residues 621–689 (GTVYNGKVVR…RQGRVRLSMK (69 aa)) form the S1 motif domain.

The protein belongs to the polyribonucleotide nucleotidyltransferase family. In terms of assembly, component of the RNA degradosome, which is a multiprotein complex involved in RNA processing and mRNA degradation. The cofactor is Mg(2+).

It localises to the cytoplasm. The catalysed reaction is RNA(n+1) + phosphate = RNA(n) + a ribonucleoside 5'-diphosphate. In terms of biological role, involved in mRNA degradation. Catalyzes the phosphorolysis of single-stranded polyribonucleotides processively in the 3'- to 5'-direction. The protein is Polyribonucleotide nucleotidyltransferase of Shewanella woodyi (strain ATCC 51908 / MS32).